The following is a 446-amino-acid chain: Mycosin-1 (446 aa).

An N-terminal signal peptide occupies residues 1 to 21 (MHRIFLITVALALLTASPASA). A disordered region spans residues 24-43 (PPPIDPGALPPDVTGPDQPT). The 324-residue stretch at 64–387 (PWSNTYLGVA…AGVIDAVAAL (324 aa)) folds into the Peptidase S8 domain. Residues aspartate 90, histidine 121, and serine 332 each act as charge relay system in the active site. A helical membrane pass occupies residues 419-439 (ITAVALVAVGLTLALGLGALA).

This sequence belongs to the peptidase S8 family.

The protein resides in the cell membrane. May play a dual role in regulation of ESX-1 secretion and virulence. Acts as a protease that cleaves EspB. Essential for ESX-1 function, required for early replication in macrophages and full virulence in mice. The protein is Mycosin-1 of Mycobacterium tuberculosis (strain ATCC 25618 / H37Rv).